The sequence spans 267 residues: tRNA-cytidine(32) 2-sulfurtransferase 1 (267 aa).

The PP-loop motif signature appears at 42 to 47; it reads SGGKDS. [4Fe-4S] cluster contacts are provided by Cys117, Cys120, and Cys208.

This sequence belongs to the TtcA family. As to quaternary structure, homodimer. It depends on Mg(2+) as a cofactor. [4Fe-4S] cluster is required as a cofactor.

It localises to the cytoplasm. It catalyses the reaction cytidine(32) in tRNA + S-sulfanyl-L-cysteinyl-[cysteine desulfurase] + AH2 + ATP = 2-thiocytidine(32) in tRNA + L-cysteinyl-[cysteine desulfurase] + A + AMP + diphosphate + H(+). It functions in the pathway tRNA modification. In terms of biological role, catalyzes the ATP-dependent 2-thiolation of cytidine in position 32 of tRNA, to form 2-thiocytidine (s(2)C32). The sulfur atoms are provided by the cysteine/cysteine desulfurase (IscS) system. This Francisella tularensis subsp. novicida (strain U112) protein is tRNA-cytidine(32) 2-sulfurtransferase 1.